The primary structure comprises 514 residues: Coiled-coil domain-containing protein 174 (514 aa).

2 disordered regions span residues 42 to 83 and 137 to 162; these read AKPK…DQSR and TLEKETDDEEIEPEMEIPPPEDPDEE. Positions 63–83 are enriched in basic and acidic residues; that stretch reads KRAEKDIEQKAEEDQTLDQSR. The stretch at 66 to 98 forms a coiled coil; the sequence is EKDIEQKAEEDQTLDQSRKKLEEKAKLYEKMTK. The segment covering 141 to 162 has biased composition (acidic residues); that stretch reads ETDDEEIEPEMEIPPPEDPDEE. 2 coiled-coil regions span residues 203–227 and 266–321; these read LLSEDMKRELQRQQWEKEEEEALRK and LDML…LENG. Disordered stretches follow at residues 270 to 291 and 306 to 490; these read REQTLDQRTKREQLKEKRKAAL and LREE…PSAH. Basic and acidic residues-rich tracts occupy residues 335–354 and 376–388; these read EVPRPSRKVEVVIQERRDTK and KKQEELRDERDPE. The span at 405 to 418 shows a compositional bias: polar residues; sequence YSSQNLNSPETSPG. The segment covering 420 to 429 has biased composition (basic and acidic residues); that stretch reads TEPEISENQK.

The protein localises to the nucleus. Probably involved in neuronal development. The protein is Coiled-coil domain-containing protein 174 (CCDC174) of Gallus gallus (Chicken).